Consider the following 448-residue polypeptide: DEAD-box ATP-dependent RNA helicase CshB (448 aa).

Residues 4–32 (HPFEQFNLESSLIDAVKDLNFEKPTEIQN) carry the Q motif motif. A Helicase ATP-binding domain is found at 35-206 (IPRILKRTNL…NKYLSHPEYV (172 aa)). An ATP-binding site is contributed by 48 to 55 (SQTGTGKS). Residues 154–157 (DEAD) carry the DEAD box motif. A Helicase C-terminal domain is found at 236–386 (NLIDILNPYL…EVKAHNQRQA (151 aa)). Residues 400-418 (NKVRSKIKNKVKPGYKKKF) show a composition bias toward basic residues. The disordered stretch occupies residues 400–448 (NKVRSKIKNKVKPGYKKKFKQEVEKMKRQERKQFSKQQNRQKRKQNKKG). The span at 419–432 (KQEVEKMKRQERKQ) shows a compositional bias: basic and acidic residues. Residues 438–448 (NRQKRKQNKKG) are compositionally biased toward basic residues.

This sequence belongs to the DEAD box helicase family. CshB subfamily.

It localises to the cytoplasm. The enzyme catalyses ATP + H2O = ADP + phosphate + H(+). Probable DEAD-box RNA helicase. May work in conjunction with the cold shock proteins to ensure proper initiation of transcription at low and optimal temperatures. The polypeptide is DEAD-box ATP-dependent RNA helicase CshB (Staphylococcus aureus (strain NCTC 8325 / PS 47)).